A 204-amino-acid polypeptide reads, in one-letter code: Large ribosomal subunit protein eL15z (204 aa).

The tract at residues 161 to 204 is disordered; that stretch reads LRGLTSEGKKNRGLRGKGHNNHKNRPSRRATWKKNNSLSLRRYR. Positions 171-192 are enriched in basic residues; it reads NRGLRGKGHNNHKNRPSRRATW. The span at 193-204 shows a compositional bias: polar residues; sequence KKNNSLSLRRYR.

The protein belongs to the eukaryotic ribosomal protein eL15 family.

The sequence is that of Large ribosomal subunit protein eL15z (RPL15A) from Arabidopsis thaliana (Mouse-ear cress).